We begin with the raw amino-acid sequence, 59 residues long: Large ribosomal subunit protein bL32c (59 aa).

Residues 1-19 are compositionally biased toward basic residues; sequence MAVPKKRTSKAKKNARKAN. A disordered region spans residues 1 to 24; sequence MAVPKKRTSKAKKNARKANWKNQA.

Belongs to the bacterial ribosomal protein bL32 family.

It is found in the plastid. The protein localises to the chloroplast. The sequence is that of Large ribosomal subunit protein bL32c (rpl32) from Porphyra purpurea (Red seaweed).